The chain runs to 677 residues: Protein asunder (677 aa).

A coiled-coil region spans residues 515–540 (RLKLSKAKDQYRLLYRELEQLIQLNS). A compositionally biased stretch (low complexity) spans 578–598 (ESPLSPERLEPTSSSSSNSLL). The disordered stretch occupies residues 578 to 604 (ESPLSPERLEPTSSSSSNSLLKARKRR). Positions 598–604 (LKARKRR) match the Nuclear localization signal (NLS) motif.

It belongs to the Integrator subunit 13 family. Belongs to the multiprotein complex Integrator, at least composed of IntS1, IntS2, IntS3, IntS4, omd/IntS5, IntS6, defl/IntS7, IntS8, IntS9, IntS10, IntS11, IntS12, asun/IntS13, IntS14 and IntS15. The core complex associates with protein phosphatase 2A subunits mts/PP2A and Pp2A-29B, to form the Integrator-PP2A (INTAC) complex. Phosphorylated.

It is found in the nucleus. The protein localises to the cytoplasm. Its subcellular location is the perinuclear region. Component of the integrator complex, a multiprotein complex that terminates RNA polymerase II (Pol II) transcription in the promoter-proximal region of genes. The integrator complex provides a quality checkpoint during transcription elongation by driving premature transcription termination of transcripts that are unfavorably configured for transcriptional elongation: the complex terminates transcription by (1) catalyzing dephosphorylation of the C-terminal domain (CTD) of Pol II subunit Polr2A/Rbp1 and Spt5, and (2) degrading the exiting nascent RNA transcript via endonuclease activity. The integrator complex is also involved in the 3'-end processing of the U7 snRNA, and also the spliceosomal snRNAs U1, U2, U4 and U5. This chain is Protein asunder (asun), found in Drosophila willistoni (Fruit fly).